The following is a 293-amino-acid chain: Ribosomal protein L11 methyltransferase (293 aa).

Threonine 145, glycine 166, aspartate 188, and asparagine 230 together coordinate S-adenosyl-L-methionine.

It belongs to the methyltransferase superfamily. PrmA family.

Its subcellular location is the cytoplasm. It carries out the reaction L-lysyl-[protein] + 3 S-adenosyl-L-methionine = N(6),N(6),N(6)-trimethyl-L-lysyl-[protein] + 3 S-adenosyl-L-homocysteine + 3 H(+). In terms of biological role, methylates ribosomal protein L11. The protein is Ribosomal protein L11 methyltransferase of Sodalis glossinidius (strain morsitans).